A 67-amino-acid polypeptide reads, in one-letter code: SPbeta prophage-derived uncharacterized protein YoqK (67 aa).

The sequence is that of SPbeta prophage-derived uncharacterized protein YoqK (yoqK) from Bacillus subtilis (strain 168).